A 334-amino-acid chain; its full sequence is S-adenosylmethionine decarboxylase proenzyme 1 (334 aa).

Phe7 is a substrate binding site. Active-site residues include Glu8 and Glu11. Glu67 lines the substrate pocket. The Schiff-base intermediate with substrate; via pyruvic acid role is filled by Ser68. Ser68 bears the Pyruvic acid (Ser); by autocatalysis mark. The active-site Proton donor; for catalytic activity is the Cys82. A substrate-binding site is contributed by Phe223. Active-site proton acceptor; for processing activity residues include Ser229 and His243. Residue Glu247 coordinates substrate. The residue at position 298 (Ser298) is a Phosphoserine.

The protein belongs to the eukaryotic AdoMetDC family. In terms of assembly, heterotetramer of two alpha and two beta chains. It depends on pyruvate as a cofactor. Post-translationally, is synthesized initially as an inactive proenzyme. Formation of the active enzyme involves a self-maturation process in which the active site pyruvoyl group is generated from an internal serine residue via an autocatalytic post-translational modification. Two non-identical subunits are generated from the proenzyme in this reaction, and the pyruvate is formed at the N-terminus of the alpha chain, which is derived from the carboxyl end of the proenzyme. The post-translation cleavage follows an unusual pathway, termed non-hydrolytic serinolysis, in which the side chain hydroxyl group of the serine supplies its oxygen atom to form the C-terminus of the beta chain, while the remainder of the serine residue undergoes an oxidative deamination to produce ammonia and the pyruvoyl group blocking the N-terminus of the alpha chain. In terms of tissue distribution, expressed in embryonic stem cells; subsequently down-regulated in differentiating neural precursor cells.

It catalyses the reaction S-adenosyl-L-methionine + H(+) = S-adenosyl 3-(methylsulfanyl)propylamine + CO2. The protein operates within amine and polyamine biosynthesis; S-adenosylmethioninamine biosynthesis; S-adenosylmethioninamine from S-adenosyl-L-methionine: step 1/1. Essential for biosynthesis of the polyamines spermidine and spermine. Promotes maintenance and self-renewal of embryonic stem cells, by maintaining spermine levels. The sequence is that of S-adenosylmethionine decarboxylase proenzyme 1 (Amd1) from Mus musculus (Mouse).